Consider the following 139-residue polypeptide: Holo-[acyl-carrier-protein] synthase (139 aa).

Mg(2+)-binding residues include Asp-8 and Glu-61.

The protein belongs to the P-Pant transferase superfamily. AcpS family. Requires Mg(2+) as cofactor.

It is found in the cytoplasm. The catalysed reaction is apo-[ACP] + CoA = holo-[ACP] + adenosine 3',5'-bisphosphate + H(+). Transfers the 4'-phosphopantetheine moiety from coenzyme A to a Ser of acyl-carrier-protein. This Nitrobacter winogradskyi (strain ATCC 25391 / DSM 10237 / CIP 104748 / NCIMB 11846 / Nb-255) protein is Holo-[acyl-carrier-protein] synthase.